Consider the following 158-residue polypeptide: Putative pre-16S rRNA nuclease (158 aa).

It belongs to the YqgF nuclease family.

It is found in the cytoplasm. Functionally, could be a nuclease involved in processing of the 5'-end of pre-16S rRNA. The polypeptide is Putative pre-16S rRNA nuclease (Acidiphilium cryptum (strain JF-5)).